A 141-amino-acid chain; its full sequence is Nucleoside diphosphate kinase (141 aa).

ATP-binding residues include Lys11, Phe59, Arg87, Thr93, Arg104, and Asn114. The Pros-phosphohistidine intermediate role is filled by His117.

Belongs to the NDK family. As to quaternary structure, homotetramer. Mg(2+) serves as cofactor.

The protein localises to the cytoplasm. It catalyses the reaction a 2'-deoxyribonucleoside 5'-diphosphate + ATP = a 2'-deoxyribonucleoside 5'-triphosphate + ADP. The enzyme catalyses a ribonucleoside 5'-diphosphate + ATP = a ribonucleoside 5'-triphosphate + ADP. Major role in the synthesis of nucleoside triphosphates other than ATP. The ATP gamma phosphate is transferred to the NDP beta phosphate via a ping-pong mechanism, using a phosphorylated active-site intermediate. The polypeptide is Nucleoside diphosphate kinase (Pseudomonas fluorescens (strain ATCC BAA-477 / NRRL B-23932 / Pf-5)).